A 217-amino-acid polypeptide reads, in one-letter code: Flagellar L-ring protein 2 (217 aa).

A signal peptide spans 1–15 (MRILLALTWLAWLGA). Residue cysteine 16 is the site of N-palmitoyl cysteine attachment. Cysteine 16 carries S-diacylglycerol cysteine lipidation.

The protein belongs to the FlgH family. In terms of assembly, the basal body constitutes a major portion of the flagellar organelle and consists of four rings (L,P,S, and M) mounted on a central rod.

It localises to the cell outer membrane. The protein resides in the bacterial flagellum basal body. In terms of biological role, assembles around the rod to form the L-ring and probably protects the motor/basal body from shearing forces during rotation. In Burkholderia thailandensis (strain ATCC 700388 / DSM 13276 / CCUG 48851 / CIP 106301 / E264), this protein is Flagellar L-ring protein 2.